We begin with the raw amino-acid sequence, 369 residues long: UDP-N-acetylglucosamine--N-acetylmuramyl-(pentapeptide) pyrophosphoryl-undecaprenol N-acetylglucosamine transferase (369 aa).

UDP-N-acetyl-alpha-D-glucosamine contacts are provided by residues 10-12, Asn-124, Arg-166, Ser-196, and Gln-300; that span reads TGG.

It belongs to the glycosyltransferase 28 family. MurG subfamily.

It is found in the cell membrane. It carries out the reaction di-trans,octa-cis-undecaprenyl diphospho-N-acetyl-alpha-D-muramoyl-L-alanyl-D-glutamyl-meso-2,6-diaminopimeloyl-D-alanyl-D-alanine + UDP-N-acetyl-alpha-D-glucosamine = di-trans,octa-cis-undecaprenyl diphospho-[N-acetyl-alpha-D-glucosaminyl-(1-&gt;4)]-N-acetyl-alpha-D-muramoyl-L-alanyl-D-glutamyl-meso-2,6-diaminopimeloyl-D-alanyl-D-alanine + UDP + H(+). The protein operates within cell wall biogenesis; peptidoglycan biosynthesis. Functionally, cell wall formation. Catalyzes the transfer of a GlcNAc subunit on undecaprenyl-pyrophosphoryl-MurNAc-pentapeptide (lipid intermediate I) to form undecaprenyl-pyrophosphoryl-MurNAc-(pentapeptide)GlcNAc (lipid intermediate II). This is UDP-N-acetylglucosamine--N-acetylmuramyl-(pentapeptide) pyrophosphoryl-undecaprenol N-acetylglucosamine transferase from Desulfitobacterium hafniense (strain Y51).